We begin with the raw amino-acid sequence, 149 residues long: Angiogenin (149 aa).

Positions 1 to 24 are cleaved as a signal peptide; it reads MVMGLGPLVLIFVLGLGVTPPTLA. Pyrrolidone carboxylic acid is present on Gln25. His37 serves as the catalytic Proton acceptor. Arg45 is a tRNA binding site. 3 disulfide bridges follow: Cys50-Cys105, Cys63-Cys116, and Cys81-Cys131. The Nucleolar localization signal motif lies at 55–59; the sequence is KRRDL. TRNA-binding residues include Cys105 and Ile127. His138 functions as the Proton donor in the catalytic mechanism.

This sequence belongs to the pancreatic ribonuclease family. Homodimer. Interacts with RNH1; inhibiting ANG ribonuclease activity. Interacts with PCNA.

It localises to the secreted. The protein resides in the nucleus. The protein localises to the nucleolus. It is found in the cytoplasm. Its subcellular location is the stress granule. Its activity is regulated as follows. Has weak tRNA ribonuclease activity by itself due to partial autoinhibition by its C-terminus, which folds into a short alpha-helix that partially occludes the substrate-binding site. In absence of stress, the ribonuclease activity is inhibited by RNH1 in the cytoplasm. In response to stress, dissociates from RNH1 in the cytoplasm and associates with cytoplasmic ribosomes with vacant A-sites: ribosomes directly activate the tRNA ribonuclease activity of ANG by refolding the C-terminal alpha-helix. In response to stress, the angiogenic activity of ANG is inhibited by RNH1 in the nucleus. Secreted ribonuclease that can either promote or restrict cell proliferation of target cells, depending on the context. Endocytosed in target cells via its receptor PLXNB2 and translocates to the cytoplasm or nucleus. Under stress conditions, localizes to the cytoplasm and promotes the assembly of stress granules (SGs): specifically cleaves a subset of tRNAs within anticodon loops to produce tRNA-derived stress-induced fragments (tiRNAs), resulting in translation repression and inhibition of cell proliferation. tiRNas also prevent formation of apoptosome, thereby promoting cell survival. Preferentially cleaves RNAs between a pyrimidine and an adenosine residue, suggesting that it cleaves the anticodon loop of tRNA(Ala) (32-UUAGCAU-38) after positions 33 and 36. Cleaves a subset of tRNAs, including tRNA(Ala), tRNA(Glu), tRNA(Gly), tRNA(Lys), tRNA(Val), tRNA(His), tRNA(Asp) and tRNA(Sec). Under growth conditions and in differentiated cells, translocates to the nucleus and stimulates ribosomal RNA (rRNA) transcription, including that containing the initiation site sequences of 45S rRNA, thereby promoting cell growth and proliferation. Angiogenin induces vascularization of normal and malignant tissues via its ability to promote rRNA transcription. Involved in hematopoietic stem and progenitor cell (HSPC) growth and survival by promoting rRNA transcription in growth conditions and inhibiting translation in response to stress, respectively. Mediates the crosstalk between myeloid and intestinal epithelial cells to protect the intestinal epithelial barrier integrity: secreted by myeloid cells and promotes intestinal epithelial cells proliferation and survival. Also mediates osteoclast-endothelial cell crosstalk in growing bone: produced by osteoclasts and protects the neighboring vascular cells against senescence by promoting rRNA transcription. This is Angiogenin (ANG) from Oryctolagus cuniculus (Rabbit).